The sequence spans 226 residues: Fibrillarin-like rRNA/tRNA 2'-O-methyltransferase (226 aa).

S-adenosyl-L-methionine contacts are provided by residues Thr85–Thr86, Glu104–Phe105, Asp129–Ala130, and Asp149–Gln152.

It belongs to the methyltransferase superfamily. Fibrillarin family. In terms of assembly, interacts with nop5. Component of box C/D small ribonucleoprotein (sRNP) particles that contain rpl7ae, FlpA and nop5, plus a guide RNA.

Its function is as follows. Involved in pre-rRNA and tRNA processing. Utilizes the methyl donor S-adenosyl-L-methionine to catalyze the site-specific 2'-hydroxyl methylation of ribose moieties in rRNA and tRNA. Site specificity is provided by a guide RNA that base pairs with the substrate. Methylation occurs at a characteristic distance from the sequence involved in base pairing with the guide RNA. In Thermococcus onnurineus (strain NA1), this protein is Fibrillarin-like rRNA/tRNA 2'-O-methyltransferase.